A 101-amino-acid chain; its full sequence is Small ribosomal subunit protein uS14 (101 aa).

The protein belongs to the universal ribosomal protein uS14 family. Part of the 30S ribosomal subunit. Contacts proteins S3 and S10.

Its function is as follows. Binds 16S rRNA, required for the assembly of 30S particles and may also be responsible for determining the conformation of the 16S rRNA at the A site. The protein is Small ribosomal subunit protein uS14 of Alcanivorax borkumensis (strain ATCC 700651 / DSM 11573 / NCIMB 13689 / SK2).